We begin with the raw amino-acid sequence, 119 residues long: MKFFKRYNIDQKTLDEFKKYYVLLHGPFPNDMYDFEEETNTSLDEFYEFFALITGSLNYIIEDKKIPRYQREMLKKTFYEHYPHFRNYKSDILKYQELSECLEFHEKIRILINKLITGG.

In terms of biological role, immunity protein component of a toxin-immunity protein module, which functions as a cellular contact-dependent growth inhibition (CDI) system. Neutralizes the tRNase activity of cognate toxin WapA upon expression in E.coli. Does not inhibit WapA from other strains of B.subtilis. The WapA C-terminus cannot be expressed on its own in E.coli, however it can be cloned in the presence of its cognate immunity protein gene. Cell contact is probably necessary for growth inhibition. In Bacillus subtilis subsp. natto (strain BEST195), this protein is Immunity protein WapI (wapI).